The sequence spans 626 residues: Janus kinase and microtubule-interacting protein 1 (626 aa).

Residues 1 to 365 are mediates association with microtubules; sequence MSKKGRSKGE…KIKNLTRENV (365 aa). Coiled coils occupy residues 19-254 and 284-413; these read VQMA…REAE and ERDV…DDLS. The tract at residues 365–626 is mediates interaction with TYK2 and GABBR1; the sequence is VEMKEKLSAQ…ILFEPKLKFM (262 aa). At S382 the chain carries Phosphoserine. Residues 452–461 show a composition bias toward polar residues; that stretch reads ETLSETSCNT. A disordered region spans residues 452–480; sequence ETLSETSCNTDRTDRAPATPEEDLDDTTT. T470 carries the post-translational modification Phosphothreonine. Positions 490-604 form a coiled coil; the sequence is QLTREYQALQ…EFRVLELEVR (115 aa).

Belongs to the JAKMIP family. In terms of assembly, homodimer. Forms a complex with GABBR1 and KIF5B/kinesin-1. Interacts with JAK1 and TYK2. In terms of processing, phosphorylated.

It is found in the cytoplasm. It localises to the cytoskeleton. The protein resides in the membrane. Its function is as follows. Associates with microtubules and may play a role in the microtubule-dependent transport of the GABA-B receptor. May play a role in JAK1 signaling and regulate microtubule cytoskeleton rearrangements. The polypeptide is Janus kinase and microtubule-interacting protein 1 (JAKMIP1) (Bos taurus (Bovine)).